The following is a 154-amino-acid chain: Large ribosomal subunit protein uL13 (154 aa).

Belongs to the universal ribosomal protein uL13 family. Part of the 50S ribosomal subunit.

This protein is one of the early assembly proteins of the 50S ribosomal subunit, although it is not seen to bind rRNA by itself. It is important during the early stages of 50S assembly. The sequence is that of Large ribosomal subunit protein uL13 from Rhizobium leguminosarum bv. trifolii (strain WSM2304).